The following is a 357-amino-acid chain: Enoyl-[acyl-carrier-protein] reductase, mitochondrial (357 aa).

The N-terminal 19 residues, 1-19 (MLRRGFLSRINAAQWSRQM), are a transit peptide targeting the mitochondrion. The Enoyl reductase (ER) domain occupies 36–352 (EVLQLVEDKL…FKGFTGKKYI (317 aa)). The Proton donor role is filled by Y74. NADP(+)-binding positions include N147, 173–176 (NSAV), 196–198 (RDR), 264–267 (YGGM), 289–291 (FWM), K349, and K350.

It belongs to the zinc-containing alcohol dehydrogenase family. Quinone oxidoreductase subfamily. Homodimer. Expressed in the central nervous system.

Its subcellular location is the mitochondrion. The catalysed reaction is a 2,3-saturated acyl-[ACP] + NADP(+) = a (2E)-enoyl-[ACP] + NADPH + H(+). Functionally, catalyzes the NADPH-dependent reduction of trans-2-enoyl thioesters in mitochondrial fatty acid synthesis (fatty acid synthesis type II). Fatty acid chain elongation in mitochondria uses acyl carrier protein (ACP) as an acyl group carrier, but the enzyme accepts both ACP and CoA thioesters as substrates in vitro. Involved in iron homeostasis; affecting Fe-S cluster assembly and ceramide metabolism. Required for proper morphology and bioenergetic functions of mitochondria. Required for maintenance of neurons, including photoreceptor neurons. This Drosophila melanogaster (Fruit fly) protein is Enoyl-[acyl-carrier-protein] reductase, mitochondrial.